A 440-amino-acid chain; its full sequence is tRNA modification GTPase MnmE (440 aa).

Residues Arg23, Glu80, and Lys120 each contribute to the (6S)-5-formyl-5,6,7,8-tetrahydrofolate site. The TrmE-type G domain maps to Gly217 to Pro366. Position 227 (Asn227) interacts with K(+). GTP is bound by residues Asn227–Ser232, Thr246–Thr252, and Asp271–Gly274. Residue Ser231 participates in Mg(2+) binding. Positions 246, 248, and 251 each coordinate K(+). Mg(2+) is bound at residue Thr252. (6S)-5-formyl-5,6,7,8-tetrahydrofolate is bound at residue Lys440.

Belongs to the TRAFAC class TrmE-Era-EngA-EngB-Septin-like GTPase superfamily. TrmE GTPase family. As to quaternary structure, homodimer. Heterotetramer of two MnmE and two MnmG subunits. It depends on K(+) as a cofactor.

Its subcellular location is the cytoplasm. In terms of biological role, exhibits a very high intrinsic GTPase hydrolysis rate. Involved in the addition of a carboxymethylaminomethyl (cmnm) group at the wobble position (U34) of certain tRNAs, forming tRNA-cmnm(5)s(2)U34. The chain is tRNA modification GTPase MnmE from Sinorhizobium medicae (strain WSM419) (Ensifer medicae).